A 2156-amino-acid chain; its full sequence is Oxygen-regulated protein 1 (2156 aa).

The span at 1–19 shows a compositional bias: polar residues; that stretch reads MSDTPSTGFSIIHPTSSEG. The segment at 1–25 is disordered; the sequence is MSDTPSTGFSIIHPTSSEGQVPPPR. Doublecortin domains follow at residues 36–118 and 154–233; these read KRIS…VDLD and RSLV…GNYD. Disordered stretches follow at residues 353–375, 666–686, 1438–1458, and 1590–1621; these read VSKT…RTES, SSVA…SRYQ, DMEE…MTSS, and DWSD…TQEK.

In terms of assembly, interacts (via the doublecortin domains) with microtubules. Interacts with RP1L1. Interacts with MAK. Expressed in retina. Not expressed in heart, brain, placenta, lung, liver, skeletal muscle, kidney, spleen and pancreas.

The protein resides in the cytoplasm. Its subcellular location is the cytoskeleton. It is found in the cilium axoneme. It localises to the cell projection. The protein localises to the cilium. The protein resides in the photoreceptor outer segment. Functionally, microtubule-associated protein regulating the stability and length of the microtubule-based axoneme of photoreceptors. Required for the differentiation of photoreceptor cells, it plays a role in the organization of the outer segment of rod and cone photoreceptors ensuring the correct orientation and higher-order stacking of outer segment disks along the photoreceptor axoneme. This chain is Oxygen-regulated protein 1 (RP1), found in Homo sapiens (Human).